A 275-amino-acid polypeptide reads, in one-letter code: Phosphonoacetaldehyde hydrolase (275 aa).

Residue Asp-15 is the Nucleophile of the active site. 2 residues coordinate Mg(2+): Asp-15 and Ala-17. Residue Lys-56 is the Schiff-base intermediate with substrate of the active site. Asp-189 is a Mg(2+) binding site.

The protein belongs to the HAD-like hydrolase superfamily. PhnX family. As to quaternary structure, homodimer. The cofactor is Mg(2+).

The catalysed reaction is phosphonoacetaldehyde + H2O = acetaldehyde + phosphate + H(+). With respect to regulation, inhibited by phosphite, moderately inhibited by phosphonic acids, the corresponding aminophosphonic acids activate the enzyme. Functionally, involved in phosphonate degradation. In Pseudomonas aeruginosa (strain ATCC 15692 / DSM 22644 / CIP 104116 / JCM 14847 / LMG 12228 / 1C / PRS 101 / PAO1), this protein is Phosphonoacetaldehyde hydrolase.